The sequence spans 269 residues: Dermonecrotic toxin SpeSicTox-betaIB3 (269 aa).

Residue histidine 5 is part of the active site. Positions 25 and 27 each coordinate Mg(2+). The active-site Nucleophile is the histidine 41. 2 disulfide bridges follow: cysteine 45–cysteine 51 and cysteine 47–cysteine 191. Mg(2+) is bound at residue aspartate 85.

Belongs to the arthropod phospholipase D family. Class II subfamily. It depends on Mg(2+) as a cofactor. As to expression, expressed by the venom gland.

It localises to the secreted. The enzyme catalyses an N-(acyl)-sphingosylphosphocholine = an N-(acyl)-sphingosyl-1,3-cyclic phosphate + choline. It carries out the reaction an N-(acyl)-sphingosylphosphoethanolamine = an N-(acyl)-sphingosyl-1,3-cyclic phosphate + ethanolamine. The catalysed reaction is a 1-acyl-sn-glycero-3-phosphocholine = a 1-acyl-sn-glycero-2,3-cyclic phosphate + choline. It catalyses the reaction a 1-acyl-sn-glycero-3-phosphoethanolamine = a 1-acyl-sn-glycero-2,3-cyclic phosphate + ethanolamine. In terms of biological role, dermonecrotic toxins cleave the phosphodiester linkage between the phosphate and headgroup of certain phospholipids (sphingolipid and lysolipid substrates), forming an alcohol (often choline) and a cyclic phosphate. This toxin acts on sphingomyelin (SM). It may also act on ceramide phosphoethanolamine (CPE), lysophosphatidylcholine (LPC) and lysophosphatidylethanolamine (LPE), but not on lysophosphatidylserine (LPS), and lysophosphatidylglycerol (LPG). It acts by transphosphatidylation, releasing exclusively cyclic phosphate products as second products. Induces dermonecrosis, hemolysis, increased vascular permeability, edema, inflammatory response, and platelet aggregation. The polypeptide is Dermonecrotic toxin SpeSicTox-betaIB3 (Sicarius peruensis (Six-eyed sand spider)).